A 126-amino-acid chain; its full sequence is MSKPQAPRRVGEKEALAVATTVRGSSYKLNLVAGLIRGKKAGEALNILSFSKKAMAKDVRKVLASAIANAENNHNLDVDALIVKEASVGKSIVMKRFATRARGRSTQIIKPFSRIRVVVREQEEAE.

This sequence belongs to the universal ribosomal protein uL22 family. As to quaternary structure, part of the 50S ribosomal subunit.

Functionally, this protein binds specifically to 23S rRNA; its binding is stimulated by other ribosomal proteins, e.g. L4, L17, and L20. It is important during the early stages of 50S assembly. It makes multiple contacts with different domains of the 23S rRNA in the assembled 50S subunit and ribosome. The globular domain of the protein is located near the polypeptide exit tunnel on the outside of the subunit, while an extended beta-hairpin is found that lines the wall of the exit tunnel in the center of the 70S ribosome. The protein is Large ribosomal subunit protein uL22 of Zymomonas mobilis subsp. mobilis (strain ATCC 31821 / ZM4 / CP4).